A 217-amino-acid polypeptide reads, in one-letter code: Ribonuclease HII (217 aa).

In terms of domain architecture, RNase H type-2 spans Ser-27–Cys-216. Positions 33, 34, and 126 each coordinate a divalent metal cation.

The protein belongs to the RNase HII family. Mn(2+) is required as a cofactor. It depends on Mg(2+) as a cofactor.

The protein resides in the cytoplasm. It catalyses the reaction Endonucleolytic cleavage to 5'-phosphomonoester.. Functionally, endonuclease that specifically degrades the RNA of RNA-DNA hybrids. This is Ribonuclease HII (rnhB) from Chlamydia trachomatis serovar D (strain ATCC VR-885 / DSM 19411 / UW-3/Cx).